Reading from the N-terminus, the 159-residue chain is 2-C-methyl-D-erythritol 2,4-cyclodiphosphate synthase (159 aa).

Asp-8 and His-10 together coordinate a divalent metal cation. 4-CDP-2-C-methyl-D-erythritol 2-phosphate is bound by residues 8 to 10 (DVH) and 34 to 35 (HS). His-42 lines the a divalent metal cation pocket. 4-CDP-2-C-methyl-D-erythritol 2-phosphate is bound by residues 56-58 (DIG), 61-65 (FPDTD), 100-106 (AQAPKML), 132-135 (TTTE), Phe-139, and Arg-142.

The protein belongs to the IspF family. As to quaternary structure, homotrimer. Requires a divalent metal cation as cofactor.

It carries out the reaction 4-CDP-2-C-methyl-D-erythritol 2-phosphate = 2-C-methyl-D-erythritol 2,4-cyclic diphosphate + CMP. It functions in the pathway isoprenoid biosynthesis; isopentenyl diphosphate biosynthesis via DXP pathway; isopentenyl diphosphate from 1-deoxy-D-xylulose 5-phosphate: step 4/6. In terms of biological role, involved in the biosynthesis of isopentenyl diphosphate (IPP) and dimethylallyl diphosphate (DMAPP), two major building blocks of isoprenoid compounds. Catalyzes the conversion of 4-diphosphocytidyl-2-C-methyl-D-erythritol 2-phosphate (CDP-ME2P) to 2-C-methyl-D-erythritol 2,4-cyclodiphosphate (ME-CPP) with a corresponding release of cytidine 5-monophosphate (CMP). The sequence is that of 2-C-methyl-D-erythritol 2,4-cyclodiphosphate synthase from Salmonella typhimurium (strain LT2 / SGSC1412 / ATCC 700720).